A 776-amino-acid polypeptide reads, in one-letter code: K(+) efflux antiporter 3, chloroplastic (776 aa).

The transit peptide at Met1 to Phe72 directs the protein to the chloroplast. Topologically, residues Tyr73 to Asp93 are lumenal, thylakoid. A helical transmembrane segment spans residues Val94–Val114. A topological domain (stromal) is located at residue Thr115. A helical transmembrane segment spans residues Val116 to Ala136. The Lumenal, thylakoid portion of the chain corresponds to Gly137–Lys153. The helical transmembrane segment at Val154–Ala174 threads the bilayer. Topologically, residues Arg175 to Lys181 are stromal. A helical transmembrane segment spans residues Phe182–Glu202. At Leu203–Glu232 the chain is on the lumenal, thylakoid side. A helical transmembrane segment spans residues Ala233 to Ala253. Topologically, residues Glu254 to Thr266 are stromal. The chain crosses the membrane as a helical span at residues Leu267–Leu287. Residues Glu288–Ser296 lie on the Lumenal, thylakoid side of the membrane. A helical membrane pass occupies residues Ile297 to Leu317. Residues Gly318–Ala338 lie on the Stromal side of the membrane. The helical transmembrane segment at Phe339 to Phe359 threads the bilayer. Residues Ser360–Arg389 lie on the Lumenal, thylakoid side of the membrane. The helical transmembrane segment at Gly390–Phe410 threads the bilayer. The Stromal segment spans residues Arg411–Asn415. The helical transmembrane segment at Val416–Pro436 threads the bilayer. Over Arg437–Ser445 the chain is Lumenal, thylakoid. A helical transmembrane segment spans residues Val446–Ala466. The Stromal segment spans residues Asn467 to Arg468. The chain crosses the membrane as a helical span at residues Leu469 to Ala489. Topologically, residues Leu490–Ser526 are lumenal, thylakoid. Residues Ser524–Leu649 enclose the RCK N-terminal domain. A helical membrane pass occupies residues Ile527–Leu547. Residues Val548 to Asp776 are Stromal-facing. The interval Met728–Asp776 is disordered.

Belongs to the monovalent cation:proton antiporter 2 (CPA2) transporter (TC 2.A.37) family. KEA (TC 2.A.37.1) subfamily. As to expression, expressed at low levels in flowers, siliques and leaves. In terms of tissue distribution, expressed at low levels in flowers and leaves. Most abundant splice form in all organs, including siliques, flowers, leaves and roots. Preferentially expressed in photosynthetically active tissues, including seedling cotyledons and mature leaves. As to expression, expressed in shoots and roots.

It is found in the plastid. It localises to the chloroplast membrane. The protein localises to the golgi apparatus membrane. Its subcellular location is the chloroplast thylakoid membrane. The catalysed reaction is K(+)(in) + H(+)(out) = K(+)(out) + H(+)(in). Its activity is regulated as follows. Regulated by a mechanism involving lumenal C-terminus region; a fine-tuned balance between photoprotective energy dissipation in high light and a maximum quantum yield in low light involves a reduced activity under high light. Its function is as follows. Electroneutral K(+)/H(+) efflux antiporter assuring proton efflux from the thylakoid lumen to the plastid stroma, thus increasing the membrane potential at the expense of the proton gradient (delta pH) component of the proton motive force (PMF). Promotes photosynthesis and growth in conditions where the chloroplast (cp)ATP synthase activity is low (e.g. cgl160 mutant background) by reducing the pH gradient across the thylakoid membrane. Accelerates photosynthetic acclimation in fluctuating light environments by modulating two components of the proton motive force, the proton gradient and the electric potential (delta Psi). Promotes the relaxation of photoprotective energy-dependent non-photochemical quenching (NPQ) after transitions from high to low light, thus enhancing photosystem II (PSII) quantum efficiency in fluctuating light. On transition from high to low light, slows down photoprotection by dissipating the pH gradient across the thylakoid membrane. During photosynthetic response on transition from dark to low light, involved in a sequential mechanism of adaptation; VCCN1 and CLCe first trigger the activation of photoprotection, which is later down-regulated by KEA3 to a low steady state, while adjusting electron transport. Together with the chloroplast NADH dehydrogenase-like (NDH) complex, maximizes photosynthesis efficiency after a long dark adaptation. Required in roots for rapid hyperosmotic-induced Ca(2+) responses and for osmo-sensory potentiation in hyperosmotic conditions. In terms of biological role, low K(+)/H(+) efflux antiporter activity. Functionally, low K(+)/H(+) efflux antiporter activity. Promotes non-photochemical quenching (NPQ) in high light conditions. This is K(+) efflux antiporter 3, chloroplastic from Arabidopsis thaliana (Mouse-ear cress).